A 176-amino-acid polypeptide reads, in one-letter code: ATP-dependent protease subunit HslV (176 aa).

Thr-6 is an active-site residue. Positions 161, 164, and 167 each coordinate Na(+).

This sequence belongs to the peptidase T1B family. HslV subfamily. As to quaternary structure, a double ring-shaped homohexamer of HslV is capped on each side by a ring-shaped HslU homohexamer. The assembly of the HslU/HslV complex is dependent on binding of ATP.

It is found in the cytoplasm. It carries out the reaction ATP-dependent cleavage of peptide bonds with broad specificity.. With respect to regulation, allosterically activated by HslU binding. Its function is as follows. Protease subunit of a proteasome-like degradation complex believed to be a general protein degrading machinery. This is ATP-dependent protease subunit HslV from Pseudothermotoga lettingae (strain ATCC BAA-301 / DSM 14385 / NBRC 107922 / TMO) (Thermotoga lettingae).